A 163-amino-acid polypeptide reads, in one-letter code: uncharacterized protein (163 aa).

Transmembrane regions (helical) follow at residues 7–27 and 51–71; these read YLNE…CYIV and LVIF…LVWF.

It localises to the cell membrane. This is an uncharacterized protein from Rickettsia prowazekii (strain Madrid E).